The chain runs to 251 residues: Aliphatic sulfonates import ATP-binding protein SsuB (251 aa).

In terms of domain architecture, ABC transporter spans 3–231 (VSINEVSKYF…PRNKTSQSFQ (229 aa)). Residue 39 to 46 (GPSGCGKS) participates in ATP binding.

This sequence belongs to the ABC transporter superfamily. Aliphatic sulfonates importer (TC 3.A.1.17.2) family. The complex is composed of two ATP-binding proteins (SsuB), two transmembrane proteins (SsuC) and a solute-binding protein (SsuA).

Its subcellular location is the cell membrane. It carries out the reaction ATP + H2O + aliphatic sulfonate-[sulfonate-binding protein]Side 1 = ADP + phosphate + aliphatic sulfonateSide 2 + [sulfonate-binding protein]Side 1.. In terms of biological role, part of the ABC transporter complex SsuABC involved in aliphatic sulfonates import. Responsible for energy coupling to the transport system. This Bacillus thuringiensis subsp. konkukian (strain 97-27) protein is Aliphatic sulfonates import ATP-binding protein SsuB.